The chain runs to 495 residues: 3-octaprenyl-4-hydroxybenzoate carboxy-lyase (495 aa).

N172 is a Mn(2+) binding site. Prenylated FMN is bound by residues 175 to 177, 189 to 191, and 194 to 195; these read IYR, RWL, and RG. Residue E238 participates in Mn(2+) binding. D287 serves as the catalytic Proton donor.

This sequence belongs to the UbiD family. Homohexamer. The cofactor is prenylated FMN. Mn(2+) serves as cofactor.

It localises to the cell membrane. The enzyme catalyses a 4-hydroxy-3-(all-trans-polyprenyl)benzoate + H(+) = a 2-(all-trans-polyprenyl)phenol + CO2. The protein operates within cofactor biosynthesis; ubiquinone biosynthesis. Its function is as follows. Catalyzes the decarboxylation of 3-octaprenyl-4-hydroxy benzoate to 2-octaprenylphenol, an intermediate step in ubiquinone biosynthesis. The chain is 3-octaprenyl-4-hydroxybenzoate carboxy-lyase from Edwardsiella ictaluri (strain 93-146).